A 149-amino-acid polypeptide reads, in one-letter code: 3-hydroxyacyl-[acyl-carrier-protein] dehydratase FabZ (149 aa).

Residue His-53 is part of the active site.

This sequence belongs to the thioester dehydratase family. FabZ subfamily.

The protein localises to the cytoplasm. The enzyme catalyses a (3R)-hydroxyacyl-[ACP] = a (2E)-enoyl-[ACP] + H2O. In terms of biological role, involved in unsaturated fatty acids biosynthesis. Catalyzes the dehydration of short chain beta-hydroxyacyl-ACPs and long chain saturated and unsaturated beta-hydroxyacyl-ACPs. The sequence is that of 3-hydroxyacyl-[acyl-carrier-protein] dehydratase FabZ from Neisseria meningitidis serogroup C / serotype 2a (strain ATCC 700532 / DSM 15464 / FAM18).